The following is a 293-amino-acid chain: MTTFFQQHFSRNKWLAYAQLMRFDKPIGTLLLLYPTLWALFAAAGGMPPLSVLVIFVLGVIVMRAAGCVINDYADRHIDGEVKRTSQRPLATGRVTTTEAKILFVLLLCIAFVLDLLLNRYTFLLSFVAVALAIIYPFMKRFTHLPQVVLGMAFGWAIPMAYGAVSESLPLECWLLFFANIFWTVAYDTQYAMVDRDDDLRIGVKSTAILFAQYDNKIIALLQFITLVLLVIFGWISQYHWGYFVVLGLSASLFSHQCWLTKQRVREQCFKAFLNNHYFGLGVFFAILVGIYA.

Helical transmembrane passes span 26 to 48 (PIGTLLLLYPTLWALFAAAGGMP), 98 to 118 (TEAKILFVLLLCIAFVLDLLL), 122 to 142 (TFLLSFVAVALAIIYPFMKRF), 145 to 165 (LPQVVLGMAFGWAIPMAYGAV), 167 to 187 (ESLPLECWLLFFANIFWTVAY), 218 to 238 (IIALLQFITLVLLVIFGWISQ), 241 to 261 (WGYFVVLGLSASLFSHQCWLT), and 272 to 292 (AFLNNHYFGLGVFFAILVGIY).

The protein belongs to the UbiA prenyltransferase family. Mg(2+) serves as cofactor.

The protein resides in the cell inner membrane. The catalysed reaction is all-trans-octaprenyl diphosphate + 4-hydroxybenzoate = 4-hydroxy-3-(all-trans-octaprenyl)benzoate + diphosphate. The protein operates within cofactor biosynthesis; ubiquinone biosynthesis. In terms of biological role, catalyzes the prenylation of para-hydroxybenzoate (PHB) with an all-trans polyprenyl group. Mediates the second step in the final reaction sequence of ubiquinone-8 (UQ-8) biosynthesis, which is the condensation of the polyisoprenoid side chain with PHB, generating the first membrane-bound Q intermediate 3-octaprenyl-4-hydroxybenzoate. The sequence is that of 4-hydroxybenzoate octaprenyltransferase from Actinobacillus pleuropneumoniae serotype 3 (strain JL03).